We begin with the raw amino-acid sequence, 1174 residues long: HEAT repeat-containing protein 6 (1174 aa).

The stretch at 168–207 (NELLGPTGILVNLCDPSQPDPELWREAIHCMANLCLGVPG) is one HEAT 1 repeat. Disordered regions lie at residues 304–346 (GRSP…EELK) and 373–392 (LGPQ…KDHF). Residues 323–335 (SKKKRKAGKQKKG) are compositionally biased toward basic residues. A compositionally biased stretch (basic and acidic residues) spans 336-346 (HQGEESKEELK). 3 HEAT repeats span residues 460 to 498 (GIGS…GSKQ), 523 to 560 (SIRE…NAPY), and 566 to 603 (GLLT…AQVS). Positions 619–648 (SQNSGSATPSDPESNRKESMLEGGKKNGLH) are disordered. The span at 631-648 (ESNRKESMLEGGKKNGLH) shows a compositional bias: basic and acidic residues.

The polypeptide is HEAT repeat-containing protein 6 (heatr6) (Xenopus laevis (African clawed frog)).